We begin with the raw amino-acid sequence, 338 residues long: Inorganic pyrophosphatase (338 aa).

R129 is a diphosphate binding site. Mg(2+) contacts are provided by D166, D171, and D203.

This sequence belongs to the PPase family. As to quaternary structure, component of the NURF complex composed of Caf1-55, E(bx), Nurf-38 and Iswi. The cofactor is Mg(2+).

The protein localises to the cytoplasm. It is found in the nucleus. The catalysed reaction is diphosphate + H2O = 2 phosphate + H(+). Component of NURF (nucleosome remodeling factor), a complex which catalyzes ATP-dependent nucleosome sliding and facilitates transcription of chromatin. NURF is required for homeotic gene expression, proper larval blood cell development, normal male X chromosome morphology, ecdysteroid signaling and metamorphosis. Inorganic pyrophosphatase (PPase), hydrolyzes inorganic pyrophosphate to inorganic phosphate, essential for driving critical biosynthetic reactions including transcription, replication, and DNA repair. This chain is Inorganic pyrophosphatase (Nurf-38), found in Drosophila melanogaster (Fruit fly).